We begin with the raw amino-acid sequence, 267 residues long: Thiamine thiazole synthase (267 aa).

NAD(+) is bound by residues Ser-41, 60 to 61, Gly-68, Val-132, and 160 to 162; these read ER and HVD. 2 residues coordinate Fe cation: Asp-162 and His-177. Met-227 is a binding site for NAD(+). Arg-237 contributes to the glycine binding site.

The protein belongs to the THI4 family. As to quaternary structure, homooctamer; tetramer of dimers. Fe(2+) is required as a cofactor.

The enzyme catalyses hydrogen sulfide + glycine + NAD(+) = ADP-5-ethyl-4-methylthiazole-2-carboxylate + nicotinamide + 3 H2O + H(+). It functions in the pathway cofactor biosynthesis; thiamine diphosphate biosynthesis. Its function is as follows. Involved in the biosynthesis of the thiazole moiety of thiamine. Catalyzes the conversion of NAD and glycine to adenosine diphosphate 5-(2-hydroxyethyl)-4-methylthiazole-2-carboxylate (ADT), an adenylated thiazole intermediate, using free sulfide as a source of sulfur. This chain is Thiamine thiazole synthase, found in Saccharolobus solfataricus (strain ATCC 35092 / DSM 1617 / JCM 11322 / P2) (Sulfolobus solfataricus).